Reading from the N-terminus, the 253-residue chain is 1-(5-phosphoribosyl)-5-[(5-phosphoribosylamino)methylideneamino] imidazole-4-carboxamide isomerase (253 aa).

The Proton acceptor role is filled by Asp8. The active-site Proton donor is Asp129.

It belongs to the HisA/HisF family.

It localises to the cytoplasm. The catalysed reaction is 1-(5-phospho-beta-D-ribosyl)-5-[(5-phospho-beta-D-ribosylamino)methylideneamino]imidazole-4-carboxamide = 5-[(5-phospho-1-deoxy-D-ribulos-1-ylimino)methylamino]-1-(5-phospho-beta-D-ribosyl)imidazole-4-carboxamide. It functions in the pathway amino-acid biosynthesis; L-histidine biosynthesis; L-histidine from 5-phospho-alpha-D-ribose 1-diphosphate: step 4/9. This chain is 1-(5-phosphoribosyl)-5-[(5-phosphoribosylamino)methylideneamino] imidazole-4-carboxamide isomerase, found in Microcystis aeruginosa (strain NIES-843 / IAM M-2473).